Consider the following 592-residue polypeptide: Syntaxin-binding protein 3 (592 aa).

Residues 1 to 255 (MAPPVSERGL…STVLHELTFQ (255 aa)) form a mediates interaction with DOC2B region.

It belongs to the STXBP/unc-18/SEC1 family. In terms of assembly, interacts with STX4. Interacts with DOC2B; the interaction is direct, occurs at the cell membrane, excludes interaction with STX4 and regulates glucose-stimulated insulin secretion. Post-translationally, phosphorylated by PKC in platelets in response to thrombin stimulation; phosphorylation inhibits binding to STX4. In terms of tissue distribution, ubiquitously expressed in all tissues tested.

The protein resides in the cytoplasm. It localises to the cytosol. The protein localises to the cell membrane. Its function is as follows. Together with STX4 and VAMP2, may play a role in insulin-dependent movement of GLUT4 and in docking/fusion of intracellular GLUT4-containing vesicles with the cell surface in adipocytes. The sequence is that of Syntaxin-binding protein 3 (Stxbp3) from Mus musculus (Mouse).